Here is a 334-residue protein sequence, read N- to C-terminus: Trans-O-hydroxybenzylidenepyruvate hydratase-aldolase (334 aa).

The protein belongs to the DapA family.

The enzyme catalyses (3E)-4-(2-hydroxyphenyl)-2-oxobut-3-enoate + H2O = salicylaldehyde + pyruvate. Its pathway is aromatic compound metabolism; naphthalene degradation. Involved in the naphthalene upper catabolic pathway. Catalyzes the transformation of trans-O-hydroxybenzylidenepyruvate (THBPA) to salicylaldehyde and pyruvate. The reaction is reversible. The sequence is that of Trans-O-hydroxybenzylidenepyruvate hydratase-aldolase (pahE) from Pseudomonas aeruginosa.